Consider the following 426-residue polypeptide: Glutamate-1-semialdehyde 2,1-aminomutase (426 aa).

Lys265 carries the post-translational modification N6-(pyridoxal phosphate)lysine.

Belongs to the class-III pyridoxal-phosphate-dependent aminotransferase family. HemL subfamily. As to quaternary structure, homodimer. Requires pyridoxal 5'-phosphate as cofactor.

The protein localises to the cytoplasm. The enzyme catalyses (S)-4-amino-5-oxopentanoate = 5-aminolevulinate. It functions in the pathway porphyrin-containing compound metabolism; protoporphyrin-IX biosynthesis; 5-aminolevulinate from L-glutamyl-tRNA(Glu): step 2/2. The chain is Glutamate-1-semialdehyde 2,1-aminomutase from Pseudoalteromonas translucida (strain TAC 125).